The primary structure comprises 184 residues: ATP synthase subunit b, chloroplastic (184 aa).

A helical membrane pass occupies residues 27-49 (LATNLINLSVVLGVLIFFGKGVL).

This sequence belongs to the ATPase B chain family. In terms of assembly, F-type ATPases have 2 components, F(1) - the catalytic core - and F(0) - the membrane proton channel. F(1) has five subunits: alpha(3), beta(3), gamma(1), delta(1), epsilon(1). F(0) has four main subunits: a(1), b(1), b'(1) and c(10-14). The alpha and beta chains form an alternating ring which encloses part of the gamma chain. F(1) is attached to F(0) by a central stalk formed by the gamma and epsilon chains, while a peripheral stalk is formed by the delta, b and b' chains.

Its subcellular location is the plastid. The protein localises to the chloroplast thylakoid membrane. Its function is as follows. F(1)F(0) ATP synthase produces ATP from ADP in the presence of a proton or sodium gradient. F-type ATPases consist of two structural domains, F(1) containing the extramembraneous catalytic core and F(0) containing the membrane proton channel, linked together by a central stalk and a peripheral stalk. During catalysis, ATP synthesis in the catalytic domain of F(1) is coupled via a rotary mechanism of the central stalk subunits to proton translocation. Component of the F(0) channel, it forms part of the peripheral stalk, linking F(1) to F(0). This chain is ATP synthase subunit b, chloroplastic, found in Spinacia oleracea (Spinach).